Reading from the N-terminus, the 123-residue chain is Protein Wnt-3a (123 aa).

Serine 1 carries the O-palmitoleoyl serine lipid modification. A disulfide bridge links cysteine 89 with cysteine 104. Asparagine 90 carries an N-linked (GlcNAc...) asparagine glycan.

It belongs to the Wnt family. Disulfide bonds have critical and distinct roles in secretion and activity. Loss of each conserved cysteine results in high molecular weight oxidized Wnt oligomers, which are formed through inter-Wnt disulfide bonding. Post-translationally, palmitoleoylation is required for efficient binding to frizzled receptors. Depalmitoleoylation leads to Wnt signaling pathway inhibition.

Its subcellular location is the secreted. It is found in the extracellular space. It localises to the extracellular matrix. In terms of biological role, ligand for members of the frizzled family of seven transmembrane receptors. Functions in the canonical Wnt signaling pathway that results in activation of transcription factors of the TCF/LEF family. Required for normal embryonic mesoderm development and formation of caudal somites. Required for normal morphogenesis of the developing neural tube. The polypeptide is Protein Wnt-3a (WNT3A) (Meleagris gallopavo (Wild turkey)).